Reading from the N-terminus, the 673-residue chain is Flotillin family inner membrane protein sll1021 (673 aa).

The chain crosses the membrane as a helical span at residues 60-80 (LLFFPVVIIAVIFLILVTIFL). The segment at 639 to 673 (LQDPPSVSPPSAAVSEDDWPDLAPPTETNFSPEEI) is disordered. Over residues 664 to 673 (TETNFSPEEI) the composition is skewed to polar residues.

The protein belongs to the band 7/mec-2 family. Flotillin subfamily. In terms of assembly, homooligomerizes.

It is found in the cell inner membrane. The protein resides in the membrane raft. Its function is as follows. Found in functional membrane microdomains (FMM) that may be equivalent to eukaryotic membrane rafts. FMMs are highly dynamic and increase in number as cells age. Flotillins are thought to be important factors in membrane fluidity. The chain is Flotillin family inner membrane protein sll1021 from Synechocystis sp. (strain ATCC 27184 / PCC 6803 / Kazusa).